Here is a 110-residue protein sequence, read N- to C-terminus: Competence pilus inhibition repressor (110 aa).

Residues 7 to 61 form the HTH cro/C1-type domain; sequence VRFLRKRQGWTQQQLADFSHTSKSNISNLENGNQGYSPAILEYLAKAFNCSVSQI. Residues 18–37 constitute a DNA-binding region (H-T-H motif); that stretch reads QQQLADFSHTSKSNISNLEN.

Its function is as follows. Represses transcription of the PilB-specific inhibitory protein CpiA. The polypeptide is Competence pilus inhibition repressor (Acinetobacter baylyi (strain ATCC 33305 / BD413 / ADP1)).